The primary structure comprises 472 residues: MAKTYDAGVKEYRETYWMPEYTPLDTDILACFKVTPQPGVPREEVAAAVAAESSTGTWTTVWTDLLTDLDHYKGRAYAIEDVPGDDTCFYAFIAYPIDLFEEGSVVNVMTSLVGNVFGFKALRALRLEDIRFPIAYVMTCNGPPQGIQVERDLLNKYGRPLLGCTIKPKLGLSAKNYGRACYEGLRGGLDFTKDDENVNSQPFMRWRHRFDFVMEAIQKAEAETGERKGHYLNVTAPTSDEMMKRAEYAKEIGAPIIMHDYITGGWSANTQLAQWCQDNGMLLHIHRAMHAVLDRNPHHGIHFRVLTKILRLSGGDHLHSGTVVGKLEGDREATLGWIDIMRDSFNKEDRSRGIFFDQDWGSMPGVLPVASGGIHVWHMPALVNIFGDDSVLQFGGGTLGHPWGNAAGAAANRVAVEACVEARNNGRELEKEGKEILTTAAAHSPELKAAMETWKEIKFEFDTVDKLDVSHK.

2 residues coordinate substrate: Asn115 and Thr165. The active-site Proton acceptor is the Lys167. Lys169 is a substrate binding site. The Mg(2+) site is built by Lys193, Asp195, and Glu196. An N6-carboxylysine modification is found at Lys193. The Proton acceptor role is filled by His286. Substrate-binding residues include Arg287, His319, and Ser371.

Belongs to the RuBisCO large chain family. Type I subfamily. As to quaternary structure, heterohexadecamer of 8 large chains and 8 small chains. Requires Mg(2+) as cofactor.

The enzyme catalyses 2 (2R)-3-phosphoglycerate + 2 H(+) = D-ribulose 1,5-bisphosphate + CO2 + H2O. It catalyses the reaction D-ribulose 1,5-bisphosphate + O2 = 2-phosphoglycolate + (2R)-3-phosphoglycerate + 2 H(+). Its function is as follows. RuBisCO catalyzes two reactions: the carboxylation of D-ribulose 1,5-bisphosphate, the primary event in carbon dioxide fixation, as well as the oxidative fragmentation of the pentose substrate. Both reactions occur simultaneously and in competition at the same active site. This chain is Ribulose bisphosphate carboxylase large chain, found in Solemya velum gill symbiont.